A 415-amino-acid chain; its full sequence is Thyroxine-binding globulin (415 aa).

The signal sequence occupies residues 1-20; sequence MSPFLYLVLLVLGLHATIHC. Asparagine 36, asparagine 99, asparagine 165, and asparagine 253 each carry an N-linked (GlcNAc...) asparagine glycan. Residues asparagine 293 and arginine 398 each contribute to the thyroxine site.

The protein belongs to the serpin family.

It localises to the secreted. Functionally, major thyroid hormone transport protein in serum. This chain is Thyroxine-binding globulin (SERPINA7), found in Pan troglodytes (Chimpanzee).